The chain runs to 246 residues: Osmotin-like protein TPM-1 (246 aa).

Positions 1–21 (MAYLRSSFVFFLLAFVTYTYA) are cleaved as a signal peptide. Cystine bridges form between C30/C225, C72/C82, C87/C93, C141/C213, C146/C196, C154/C164, C168/C177, and C178/C183.

It belongs to the thaumatin family.

The protein resides in the vacuole. It carries out the reaction Endohydrolysis of (1-&gt;3)- or (1-&gt;4)-linkages in beta-D-glucans when the glucose residue whose reducing group is involved in the linkage to be hydrolyzed is itself substituted at C-3.. Antifungal protein that inhibits the growth of several phytopathogenic fungi (e.g. Trichothecium roseum, Fusarium oxysporum, Phytophthora citrophthora and Colletotrichum coccodes). May bind to beta-glucans and have beta-1,3-D-glucanase activity. This is Osmotin-like protein TPM-1 from Solanum lycopersicum (Tomato).